Here is a 79-residue protein sequence, read N- to C-terminus: D-alanyl carrier protein (79 aa).

Residues 1-77 (MDVKETILNI…KIISGVVELM (77 aa)) form the Carrier domain. Serine 35 is subject to O-(pantetheine 4'-phosphoryl)serine.

The protein belongs to the DltC family. Post-translationally, 4'-phosphopantetheine is transferred from CoA to a specific serine of apo-DCP.

The protein localises to the cytoplasm. Its pathway is cell wall biogenesis; lipoteichoic acid biosynthesis. Functionally, carrier protein involved in the D-alanylation of lipoteichoic acid (LTA). The loading of thioester-linked D-alanine onto DltC is catalyzed by D-alanine--D-alanyl carrier protein ligase DltA. The DltC-carried D-alanyl group is further transferred to cell membrane phosphatidylglycerol (PG) by forming an ester bond, probably catalyzed by DltD. D-alanylation of LTA plays an important role in modulating the properties of the cell wall in Gram-positive bacteria, influencing the net charge of the cell wall. The chain is D-alanyl carrier protein from Streptococcus suis (strain 98HAH33).